The following is a 489-amino-acid chain: Ecdysteroid UDP-glucosyltransferase (489 aa).

The N-terminal stretch at 1-17 (MVFLIIALTLLATGARA) is a signal peptide.

It belongs to the UDP-glycosyltransferase family.

Its function is as follows. Catalyzes the transfer of glucose from UDP-glucose to ecdysteroids which are insect molting hormones. Expression of egt interferes with normal insect development and block molting. The sequence is that of Ecdysteroid UDP-glucosyltransferase (EGT) from Orgyia pseudotsugata (Douglas-fir tussock moth).